The following is a 167-amino-acid chain: uncharacterized protein (167 aa).

The stretch at 28–59 (LTGIREELKADIDETRLIAESVLEEKEKKVVE) forms a coiled coil.

This is an uncharacterized protein from Aquifex aeolicus (strain VF5).